The chain runs to 349 residues: Eukaryotic translation initiation factor 3 subunit I (349 aa).

6 WD repeats span residues 8-49 (GHER…GTLE), 51-91 (HIGT…QSWE), 93-135 (PTPV…DYTK), 148-187 (SDAK…FIET), 197-239 (EKIA…KVYK), and 295-336 (GHFG…FEFD).

The protein belongs to the eIF-3 subunit I family. As to quaternary structure, component of the eukaryotic translation initiation factor 3 (eIF-3) complex.

It localises to the cytoplasm. Functionally, component of the eukaryotic translation initiation factor 3 (eIF-3) complex, which is involved in protein synthesis of a specialized repertoire of mRNAs and, together with other initiation factors, stimulates binding of mRNA and methionyl-tRNAi to the 40S ribosome. The eIF-3 complex specifically targets and initiates translation of a subset of mRNAs involved in cell proliferation. This is Eukaryotic translation initiation factor 3 subunit I from Debaryomyces hansenii (strain ATCC 36239 / CBS 767 / BCRC 21394 / JCM 1990 / NBRC 0083 / IGC 2968) (Yeast).